The sequence spans 314 residues: Phospho-N-acetylmuramoyl-pentapeptide-transferase (314 aa).

Transmembrane regions (helical) follow at residues 4–24 (LIFY…PIFI), 52–72 (TMGG…TYFI), 77–97 (LFLI…LDDY), 111–131 (IQKL…ISIF), 146–166 (LDLK…MSNA), 169–189 (LTDG…LFTA), 191–211 (IAGI…AYLF), 219–239 (IFMG…LALY), 242–262 (VELF…SVII), and 294–314 (IVLI…GGVL).

Belongs to the glycosyltransferase 4 family. MraY subfamily. Mg(2+) is required as a cofactor.

It localises to the cell inner membrane. The catalysed reaction is UDP-N-acetyl-alpha-D-muramoyl-L-alanyl-gamma-D-glutamyl-meso-2,6-diaminopimeloyl-D-alanyl-D-alanine + di-trans,octa-cis-undecaprenyl phosphate = di-trans,octa-cis-undecaprenyl diphospho-N-acetyl-alpha-D-muramoyl-L-alanyl-D-glutamyl-meso-2,6-diaminopimeloyl-D-alanyl-D-alanine + UMP. Its pathway is cell wall biogenesis; peptidoglycan biosynthesis. In terms of biological role, catalyzes the initial step of the lipid cycle reactions in the biosynthesis of the cell wall peptidoglycan: transfers peptidoglycan precursor phospho-MurNAc-pentapeptide from UDP-MurNAc-pentapeptide onto the lipid carrier undecaprenyl phosphate, yielding undecaprenyl-pyrophosphoryl-MurNAc-pentapeptide, known as lipid I. The chain is Phospho-N-acetylmuramoyl-pentapeptide-transferase from Petrotoga mobilis (strain DSM 10674 / SJ95).